The primary structure comprises 663 residues: Leishmanolysin-like peptidase (663 aa).

Histidine 246 lines the Zn(2+) pocket. Residue glutamate 247 is part of the active site. Zn(2+) is bound by residues histidine 250 and histidine 353.

The protein belongs to the peptidase M8 family. Zn(2+) is required as a cofactor.

The protein localises to the cytoplasm. Essential for the coordination of mitotic progression, and also plays a role in cell migration. This Caenorhabditis elegans protein is Leishmanolysin-like peptidase.